Reading from the N-terminus, the 301-residue chain is Nucleotide-binding protein Rfer_1653 (301 aa).

An ATP-binding site is contributed by 15-22 (GMSGSGKS). 64–67 (DVRT) is a binding site for GTP.

This sequence belongs to the RapZ-like family.

Functionally, displays ATPase and GTPase activities. The polypeptide is Nucleotide-binding protein Rfer_1653 (Albidiferax ferrireducens (strain ATCC BAA-621 / DSM 15236 / T118) (Rhodoferax ferrireducens)).